Reading from the N-terminus, the 352-residue chain is Glycerol-3-phosphate dehydrogenase [NAD(P)+] (352 aa).

NADPH is bound by residues Trp-11, Arg-37, and Lys-112. Positions 112, 153, and 155 each coordinate sn-glycerol 3-phosphate. Ala-157 lines the NADPH pocket. Residues Lys-208, Asp-261, Ser-271, Arg-272, and Asn-273 each contribute to the sn-glycerol 3-phosphate site. Lys-208 serves as the catalytic Proton acceptor. Arg-272 serves as a coordination point for NADPH. Residues Val-296 and Glu-298 each coordinate NADPH.

This sequence belongs to the NAD-dependent glycerol-3-phosphate dehydrogenase family.

Its subcellular location is the cytoplasm. It carries out the reaction sn-glycerol 3-phosphate + NAD(+) = dihydroxyacetone phosphate + NADH + H(+). The catalysed reaction is sn-glycerol 3-phosphate + NADP(+) = dihydroxyacetone phosphate + NADPH + H(+). It functions in the pathway membrane lipid metabolism; glycerophospholipid metabolism. Its function is as follows. Catalyzes the reduction of the glycolytic intermediate dihydroxyacetone phosphate (DHAP) to sn-glycerol 3-phosphate (G3P), the key precursor for phospholipid synthesis. The chain is Glycerol-3-phosphate dehydrogenase [NAD(P)+] from Polaromonas naphthalenivorans (strain CJ2).